We begin with the raw amino-acid sequence, 517 residues long: Putative ribose/galactose/methyl galactoside import ATP-binding protein 1 (517 aa).

2 consecutive ABC transporter domains span residues 23–258 and 269–515; these read LQLQ…VGRP and TPTD…SGRS. 55 to 62 is an ATP binding site; sequence GENGAGKS.

Belongs to the ABC transporter superfamily. Carbohydrate importer 2 (CUT2) (TC 3.A.1.2) family.

It is found in the cell inner membrane. It carries out the reaction D-ribose(out) + ATP + H2O = D-ribose(in) + ADP + phosphate + H(+). The catalysed reaction is D-galactose(out) + ATP + H2O = D-galactose(in) + ADP + phosphate + H(+). Part of an ABC transporter complex involved in carbohydrate import. Could be involved in ribose, galactose and/or methyl galactoside import. Responsible for energy coupling to the transport system. This Burkholderia ambifaria (strain ATCC BAA-244 / DSM 16087 / CCUG 44356 / LMG 19182 / AMMD) (Burkholderia cepacia (strain AMMD)) protein is Putative ribose/galactose/methyl galactoside import ATP-binding protein 1.